The primary structure comprises 546 residues: Glucose-6-phosphate isomerase (546 aa).

The active-site Proton donor is the Glu352. Catalysis depends on residues His383 and Lys511.

It belongs to the GPI family.

It localises to the cytoplasm. The catalysed reaction is alpha-D-glucose 6-phosphate = beta-D-fructose 6-phosphate. It participates in carbohydrate biosynthesis; gluconeogenesis. Its pathway is carbohydrate degradation; glycolysis; D-glyceraldehyde 3-phosphate and glycerone phosphate from D-glucose: step 2/4. Catalyzes the reversible isomerization of glucose-6-phosphate to fructose-6-phosphate. The protein is Glucose-6-phosphate isomerase of Paramagnetospirillum magneticum (strain ATCC 700264 / AMB-1) (Magnetospirillum magneticum).